Reading from the N-terminus, the 315-residue chain is Eukaryotic translation initiation factor 2 subunit 1 (315 aa).

Residues 17–88 (DDVVMVNVRS…DKGYIDLSKR (72 aa)) enclose the S1 motif domain. Phosphoserine occurs at positions 49 and 52. The disordered stretch occupies residues 292-315 (RLEKENAEVDGDDDAEEMEAKTED). The span at 299–308 (EVDGDDDAEE) shows a compositional bias: acidic residues.

It belongs to the eIF-2-alpha family. Eukaryotic translation initiation factor 2 eIF2 is a heterotrimeric complex composed of an alpha, a beta and a gamma subunit. Phosphorylation at Ser-49 and Ser-52 stabilizes the eIF-2/GDP/eIF2B complex and prevents GDP/GTP exchange reaction, thus impairing the recycling of eIF-2 between successive rounds of initiation and leading to global inhibition of translation, while concomitantly initiating the preferential translation of integrated stress response (ISR)-specific mRNAs.

It localises to the cytoplasm. Its subcellular location is the stress granule. It is found in the cytosol. With respect to regulation, activity is regulated by phosphorylation at Ser-49 and Ser-52, which stabilizes the eIF-2/GDP/eIF2B complex and prevents the eIF2B-mediated exchange of GDP for GTP, thereby preventing the formation of the 43S pre-initiation complex (PIC). This results in the global attenuation of 5' cap-dependent protein synthesis and concomitant translation of ISR-specific mRNAs that contain a short upstream open reading frame (uORF) in their 5' UTR. Its function is as follows. Functions in the early steps of protein synthesis by forming a ternary complex with GTP and initiator tRNA. This complex binds to a 40S ribosomal subunit, followed by mRNA binding to form a 43S pre-initiation complex. Junction of the 60S ribosomal subunit to form the 80S initiation complex is preceded by hydrolysis of the GTP bound to eIF-2 and release of an eIF-2-GDP binary complex. In order for eIF-2 to recycle and catalyze another round of initiation, the GDP bound to eIF-2 must exchange with GTP by way of a reaction catalyzed by eIF2B. EIF2S1/eIF2-alpha is a key component of the integrated stress response (ISR), required for adaptation to various stress: phosphorylation by metabolic-stress sensing protein kinases in response to stress converts EIF2S1/eIF-2-alpha in a global protein synthesis inhibitor, leading to a attenuation of cap-dependent translation, while concomitantly initiating the preferential translation of ISR-specific mRNAs, such as the transcriptional activators ATF4 and QRICH1. The protein is Eukaryotic translation initiation factor 2 subunit 1 (eif2s1) of Xenopus tropicalis (Western clawed frog).